The following is a 260-amino-acid chain: Circadian clock-controlled protein daywake (260 aa).

A signal peptide spans 1 to 25 (MQLTGASMFLVWVGLLSWVSCRVDA).

This sequence belongs to the TO family. In terms of tissue distribution, epidermis of newly eclosed adults.

Functionally, component of the circadian clock or downstream effector of clock function. Required for suppressing daytime sleep (siesta) under ambient environmental temperatures. Part of a heat avoidance mechanism that modulates daytime sleep behavior under different environmental temperatures to minimize the risk of heat exposure. Under cooler ambient temperatures, suppresses daytime sleep (siesta) and thus allows for longer periods of daytime activity. The protein is Circadian clock-controlled protein daywake of Drosophila melanogaster (Fruit fly).